A 523-amino-acid polypeptide reads, in one-letter code: Calcium uptake protein 3, mitochondrial (523 aa).

The N-terminal 6 residues, 1–6 (MAALRR), are a transit peptide targeting the mitochondrion. The segment at 18–48 (LAPQQPFLSPWGRPAGTAPGMSGRPFSGREE) is disordered. The EF-hand 1 domain occupies 225–260 (KPHAGFRIAFNMFDTDGNEMVDKKEFLVLQEIFRKK). Residues aspartate 238, aspartate 240, asparagine 242, methionine 244, aspartate 246, and glutamate 249 each contribute to the Ca(2+) site. The region spanning 414–429 (ITFDEFRSFFQFLNNL) is the EF-hand 2; degenerate domain. In terms of domain architecture, EF-hand 3 spans 463–498 (LSPHLVNTVFKIFDVDKDDQLSYKEFIGIMKDRLHR). Positions 476, 478, 480, 482, and 487 each coordinate Ca(2+).

The protein belongs to the MICU1 family. MICU3 subfamily. As to quaternary structure, heterodimer; disulfide-linked; heterodimerizes with MICU1. Component of the uniplex complex, composed of MCU, EMRE/SMDT1, MICU1 and MICU3 in a 4:4:1:1 stoichiometry.

The protein localises to the mitochondrion intermembrane space. It localises to the mitochondrion inner membrane. In terms of biological role, tissue-specific calcium sensor of the mitochondrial calcium uniporter (MCU) channel, which specifically regulates MCU channel activity in the central nervous system and skeletal muscle. Senses calcium level via its EF-hand domains: compared to MICU1 and MICU2, MICU3 has a higher affinity for calcium. MICU1 and MICU3 form a disulfide-linked heterodimer that stimulates and inhibits MCU activity, depending on the concentration of calcium. At low calcium levels, MICU1 occludes the pore of the MCU channel, preventing mitochondrial calcium uptake. At higher calcium levels, calcium-binding to MICU1 and MICU3 induces a conformational change that weakens MCU-MICU1 interactions and moves the MICU1-MICU3 heterodimer away from the pore, allowing calcium permeation through the MCU channel. The high calcium affinity of MICU3 lowers the calcium threshold necessary for calcium permeation through the MCU channel. The MICU1-MICU3 heterodimer promotes flexibility of neurotransmission in neuronal cells by enhancing mitochondrial calcium uptake in presynapses. It is also required to increase mitochondrial calcium uptake in skeletal muscle cells, thereby increasing ATP production. This chain is Calcium uptake protein 3, mitochondrial, found in Rattus norvegicus (Rat).